The following is a 125-amino-acid chain: Methylglyoxal synthase (125 aa).

The 125-residue stretch at Met1–Asp125 folds into the MGS-like domain. Residues His12, Lys16, Thr38–Thr41, and Ser59–Gly60 contribute to the substrate site. The active-site Proton donor/acceptor is Asp65. His92 contributes to the substrate binding site.

It belongs to the methylglyoxal synthase family.

It carries out the reaction dihydroxyacetone phosphate = methylglyoxal + phosphate. In terms of biological role, catalyzes the formation of methylglyoxal from dihydroxyacetone phosphate. This chain is Methylglyoxal synthase, found in Brucella abortus (strain S19).